A 947-amino-acid polypeptide reads, in one-letter code: Bifunctional glutamine synthetase adenylyltransferase/adenylyl-removing enzyme (947 aa).

The interval 1–440 (MTPLSSPLSQ…VFNELIGDDE (440 aa)) is adenylyl removase. Residues 450 to 947 (SEPWREVWQD…ASWRKWLVAV (498 aa)) form an adenylyl transferase region.

It belongs to the GlnE family. Requires Mg(2+) as cofactor.

It carries out the reaction [glutamine synthetase]-O(4)-(5'-adenylyl)-L-tyrosine + phosphate = [glutamine synthetase]-L-tyrosine + ADP. It catalyses the reaction [glutamine synthetase]-L-tyrosine + ATP = [glutamine synthetase]-O(4)-(5'-adenylyl)-L-tyrosine + diphosphate. Its function is as follows. Involved in the regulation of glutamine synthetase GlnA, a key enzyme in the process to assimilate ammonia. When cellular nitrogen levels are high, the C-terminal adenylyl transferase (AT) inactivates GlnA by covalent transfer of an adenylyl group from ATP to specific tyrosine residue of GlnA, thus reducing its activity. Conversely, when nitrogen levels are low, the N-terminal adenylyl removase (AR) activates GlnA by removing the adenylyl group by phosphorolysis, increasing its activity. The regulatory region of GlnE binds the signal transduction protein PII (GlnB) which indicates the nitrogen status of the cell. The protein is Bifunctional glutamine synthetase adenylyltransferase/adenylyl-removing enzyme of Salmonella schwarzengrund (strain CVM19633).